The primary structure comprises 114 residues: uncharacterized protein (114 aa).

Disordered stretches follow at residues 26 to 45 (GMKQ…DALG) and 72 to 98 (PKGS…SVQA).

This is an uncharacterized protein from Homo sapiens (Human).